Reading from the N-terminus, the 223-residue chain is Family of serine hydrolases 2 (223 aa).

Catalysis depends on charge relay system residues Ser110, Asp174, and His203.

It belongs to the AB hydrolase 3 family.

The protein resides in the cytoplasm. In terms of biological role, serine hydrolase of unknown specificity. This chain is Family of serine hydrolases 2 (FSH2), found in Saccharomyces cerevisiae (strain ATCC 204508 / S288c) (Baker's yeast).